Here is a 95-residue protein sequence, read N- to C-terminus: Fungal defensin plectasin (95 aa).

The signal sequence occupies residues 1 to 23 (MQFTTILSIGITVFGLLNTGAFA). A propeptide spanning residues 24 to 55 (APQPVPEAYAVSDPEAHPDDFAGMDANQLQKR) is cleaved from the precursor. Residues F57, G58, and C59 each contribute to the beta-D-GlcNAc-(1-&gt;4)-Mur2Ac(oyl-L-Ala-gamma-D-Glu-L-Lys-D-Ala-D-Ala)-di-trans,octa-cis-undecaprenyl diphosphate site. 3 cysteine pairs are disulfide-bonded: C59/C85, C70/C92, and C74/C94. Positions 61 to 64 (GPWD) are binds to membrane interface. Beta-D-GlcNAc-(1-&gt;4)-Mur2Ac(oyl-L-Ala-gamma-D-Glu-L-Lys-D-Ala-D-Ala)-di-trans,octa-cis-undecaprenyl diphosphate-binding residues include D67, H73, Y84, A86, G88, C92, and K93. The binds to membrane interface stretch occupies residues 86 to 92 (AKGGFVC).

It belongs to the invertebrate defensin family. Type 2 subfamily.

The protein localises to the secreted. The protein resides in the host cell membrane. Its function is as follows. Antimicrobial peptide that potently acts against several species of Gram-positive bacteria. It selectively inhibits peptidoglycan biosynthesis through complex formation with the cell wall precursor lipid II (1:1 molar ratio) thus inhibiting cell wall synthesis. It does not disrupt cell membranes. Is especially active against numerous clinical isolates of S.pneumoniae, including all 90 different serotypes and isolates resistant to clinically used antibiotics. In vitro, shows considerable selectivity for bacteria over mammalian cells. The peptide synthesized in D-amino acids does not show antibacterial activity. In vitro, acts on voltage-gated potassium channels by moderately inhibiting mammalian Kv1.3/KCNA3 (IC(50)=2.8 uM), and moderately inhibiting others potassium channels. This Pseudoplectania nigrella (Ebony cup) protein is Fungal defensin plectasin (DEF).